The sequence spans 205 residues: Methylthioribulose-1-phosphate dehydratase (205 aa).

Residues His-96 and His-98 each contribute to the Zn(2+) site.

This sequence belongs to the aldolase class II family. MtnB subfamily. Zn(2+) is required as a cofactor.

It catalyses the reaction 5-(methylsulfanyl)-D-ribulose 1-phosphate = 5-methylsulfanyl-2,3-dioxopentyl phosphate + H2O. It participates in amino-acid biosynthesis; L-methionine biosynthesis via salvage pathway; L-methionine from S-methyl-5-thio-alpha-D-ribose 1-phosphate: step 2/6. In terms of biological role, catalyzes the dehydration of methylthioribulose-1-phosphate (MTRu-1-P) into 2,3-diketo-5-methylthiopentyl-1-phosphate (DK-MTP-1-P). The chain is Methylthioribulose-1-phosphate dehydratase from Exiguobacterium sp. (strain ATCC BAA-1283 / AT1b).